The chain runs to 259 residues: Probable WRKY transcription factor 65 (259 aa).

The segment covering 1-17 (MKRGLDMARSYNDHESS) has biased composition (basic and acidic residues). Disordered stretches follow at residues 1 to 101 (MKRG…RCSS) and 126 to 165 (TSEH…EEED). Positions 18-31 (QETGPESPNSSTFN) are enriched in polar residues. Residues 47-69 (RSVEKRVVNVPMKEMEGSRHKGD) show a composition bias toward basic and acidic residues. Residues 68–134 (GDTTPPSDSW…YTSEHNHPWP (67 aa)) constitute a DNA-binding region (WRKY). A compositionally biased stretch (acidic residues) spans 154-165 (EPEVEPEAEEED).

Its subcellular location is the nucleus. Transcription factor. Interacts specifically with the W box (5'-(T)TGAC[CT]-3'), a frequently occurring elicitor-responsive cis-acting element. This is Probable WRKY transcription factor 65 (WRKY65) from Arabidopsis thaliana (Mouse-ear cress).